Reading from the N-terminus, the 413-residue chain is S-adenosylmethionine synthase (413 aa).

An ATP-binding site is contributed by His15. Residue Asp17 coordinates Mg(2+). Glu43 is a K(+) binding site. Positions 56 and 100 each coordinate L-methionine. The segment at 100-110 (QSPDISQGVNE) is flexible loop. Residues 171–173 (DGK), 248–249 (KF), Asp257, 263–264 (RK), Ala280, and Lys284 each bind ATP. Asp257 is an L-methionine binding site. Position 288 (Lys288) interacts with L-methionine.

This sequence belongs to the AdoMet synthase family. As to quaternary structure, homotetramer; dimer of dimers. Requires Mg(2+) as cofactor. It depends on K(+) as a cofactor.

It localises to the cytoplasm. The enzyme catalyses L-methionine + ATP + H2O = S-adenosyl-L-methionine + phosphate + diphosphate. Its pathway is amino-acid biosynthesis; S-adenosyl-L-methionine biosynthesis; S-adenosyl-L-methionine from L-methionine: step 1/1. In terms of biological role, catalyzes the formation of S-adenosylmethionine (AdoMet) from methionine and ATP. The overall synthetic reaction is composed of two sequential steps, AdoMet formation and the subsequent tripolyphosphate hydrolysis which occurs prior to release of AdoMet from the enzyme. This is S-adenosylmethionine synthase from Prochlorococcus marinus (strain MIT 9515).